The following is a 403-amino-acid chain: Phosphopentomutase (403 aa).

The Mn(2+) site is built by D13, D298, H303, D339, H340, and H351.

Belongs to the phosphopentomutase family. Requires Mn(2+) as cofactor.

The protein localises to the cytoplasm. It carries out the reaction 2-deoxy-alpha-D-ribose 1-phosphate = 2-deoxy-D-ribose 5-phosphate. It catalyses the reaction alpha-D-ribose 1-phosphate = D-ribose 5-phosphate. It functions in the pathway carbohydrate degradation; 2-deoxy-D-ribose 1-phosphate degradation; D-glyceraldehyde 3-phosphate and acetaldehyde from 2-deoxy-alpha-D-ribose 1-phosphate: step 1/2. In terms of biological role, isomerase that catalyzes the conversion of deoxy-ribose 1-phosphate (dRib-1-P) and ribose 1-phosphate (Rib-1-P) to deoxy-ribose 5-phosphate (dRib-5-P) and ribose 5-phosphate (Rib-5-P), respectively. The sequence is that of Phosphopentomutase from Streptococcus pyogenes serotype M18 (strain MGAS8232).